The sequence spans 530 residues: Glutamate--tRNA ligase (530 aa).

The 'HIGH' region motif lies at 26-36 (PSPTGKAHIGT). The 'KMSKS' region signature appears at 267–271 (KLSKR). Residue Lys-270 coordinates ATP.

This sequence belongs to the class-I aminoacyl-tRNA synthetase family. Glutamate--tRNA ligase type 1 subfamily. In terms of assembly, monomer.

It is found in the cytoplasm. It carries out the reaction tRNA(Glu) + L-glutamate + ATP = L-glutamyl-tRNA(Glu) + AMP + diphosphate. Catalyzes the attachment of glutamate to tRNA(Glu) in a two-step reaction: glutamate is first activated by ATP to form Glu-AMP and then transferred to the acceptor end of tRNA(Glu). This is Glutamate--tRNA ligase from Gloeobacter violaceus (strain ATCC 29082 / PCC 7421).